The primary structure comprises 600 residues: DDB1- and CUL4-associated factor 15 (600 aa).

The segment at 1-29 (MAPSSKSERNSGAGSAGGGPGGTGGKRAV) is disordered. Residues 14–27 (GSAGGGPGGTGGKR) are compositionally biased toward gly residues. At S50 the chain carries Phosphoserine. Zn(2+) is bound by residues C193, C196, C211, and H214. S314 is modified (phosphoserine). Residues 334 to 343 (AKGSPLEETR) show a composition bias toward basic and acidic residues. The tract at residues 334–384 (AKGSPLEETRLPSSLGPSSSRCRPSLEPQAPSGEVVPRDSPPAAETTAPEP) is disordered. 2 stretches are compositionally biased toward low complexity: residues 344–359 (LPSS…RPSL) and 374–384 (PPAAETTAPEP).

As to quaternary structure, component of the DCX(DCAF15) complex, also named CLR4(DCAF15) complex, composed of DCAF15, DDB1, cullin-4 (CUL4A or CUL4B), DDA1 and RBX1.

It participates in protein modification; protein ubiquitination. In terms of biological role, substrate-recognition component of the DCX(DCAF15) complex, a cullin-4-RING E3 ubiquitin-protein ligase complex that mediates ubiquitination and degradation of target proteins. The DCX(DCAF15) complex acts as a regulator of the natural killer (NK) cells effector functions, possibly by mediating ubiquitination and degradation of cohesin subunits SMC1A and SMC3. May play a role in the activation of antigen-presenting cells (APC) and their interaction with NK cells. The polypeptide is DDB1- and CUL4-associated factor 15 (Mus musculus (Mouse)).